Reading from the N-terminus, the 368-residue chain is Ferrochelatase (368 aa).

Positions 209 and 290 each coordinate Fe cation. The interval 347 to 368 (REEQEQQAHISREEARRLGADQ) is disordered.

It belongs to the ferrochelatase family.

The protein localises to the cytoplasm. It catalyses the reaction heme b + 2 H(+) = protoporphyrin IX + Fe(2+). It participates in porphyrin-containing compound metabolism; protoheme biosynthesis; protoheme from protoporphyrin-IX: step 1/1. Functionally, catalyzes the ferrous insertion into protoporphyrin IX. This Janthinobacterium sp. (strain Marseille) (Minibacterium massiliensis) protein is Ferrochelatase.